The primary structure comprises 71 residues: HSEGTFSNDYSKYLETRRAQDFVQWLMNSXXXXXXXXHADGTYTSDVSSYLQEQAAKDFITWLKSGQPKPE.

This sequence belongs to the glucagon family.

Its subcellular location is the secreted. In terms of biological role, plays a key role in glucose metabolism and homeostasis. Regulates blood glucose by increasing gluconeogenesis and decreasing glycolysis. This Ictalurus punctatus (Channel catfish) protein is Pro-glucagon (gcg).